A 301-amino-acid polypeptide reads, in one-letter code: Tyrosine recombinase XerD (301 aa).

Residues 7–90 enclose the Core-binding (CB) domain; it reads QFHTTILEQF…ALKVFFLFLK (84 aa). The region spanning 109–294 is the Tyr recombinase domain; it reads RLPSVLTPQE…AADSLIEKFL (186 aa). Residues R153, K175, H246, R249, and H272 contribute to the active site. Y281 functions as the O-(3'-phospho-DNA)-tyrosine intermediate in the catalytic mechanism.

Belongs to the 'phage' integrase family. XerD subfamily. In terms of assembly, forms a cyclic heterotetrameric complex composed of two molecules of XerC and two molecules of XerD.

Its subcellular location is the cytoplasm. Functionally, site-specific tyrosine recombinase, which acts by catalyzing the cutting and rejoining of the recombining DNA molecules. The XerC-XerD complex is essential to convert dimers of the bacterial chromosome into monomers to permit their segregation at cell division. It also contributes to the segregational stability of plasmids. This is Tyrosine recombinase XerD from Chlamydia pneumoniae (Chlamydophila pneumoniae).